The chain runs to 75 residues: Anionic peptide (75 aa).

Positions 1–24 (MVSKSLIVLLLVSVLVSTFYTSEA) are cleaved as a signal peptide.

It belongs to the non-disulfide-bridged peptide (NDBP) superfamily. As to expression, expressed by the venom gland.

Its subcellular location is the secreted. This Tityus discrepans (Venezuelan scorpion) protein is Anionic peptide.